The following is a 264-amino-acid chain: Thymidylate synthase 2 (264 aa).

Arginine 21 is a dUMP binding site. Histidine 51 provides a ligand contact to (6R)-5,10-methylene-5,6,7,8-tetrahydrofolate. 126–127 (RR) lines the dUMP pocket. Cysteine 146 functions as the Nucleophile in the catalytic mechanism. Residues 166–169 (RSAD), asparagine 177, and 207–209 (HIY) contribute to the dUMP site. Residue aspartate 169 participates in (6R)-5,10-methylene-5,6,7,8-tetrahydrofolate binding. Serine 263 provides a ligand contact to (6R)-5,10-methylene-5,6,7,8-tetrahydrofolate.

The protein belongs to the thymidylate synthase family. Bacterial-type ThyA subfamily. As to quaternary structure, homodimer.

The protein localises to the cytoplasm. It catalyses the reaction dUMP + (6R)-5,10-methylene-5,6,7,8-tetrahydrofolate = 7,8-dihydrofolate + dTMP. It functions in the pathway pyrimidine metabolism; dTTP biosynthesis. In terms of biological role, catalyzes the reductive methylation of 2'-deoxyuridine-5'-monophosphate (dUMP) to 2'-deoxythymidine-5'-monophosphate (dTMP) while utilizing 5,10-methylenetetrahydrofolate (mTHF) as the methyl donor and reductant in the reaction, yielding dihydrofolate (DHF) as a by-product. This enzymatic reaction provides an intracellular de novo source of dTMP, an essential precursor for DNA biosynthesis. The sequence is that of Thymidylate synthase 2 from Bacillus subtilis (strain 168).